Here is a 359-residue protein sequence, read N- to C-terminus: 3-isopropylmalate dehydrogenase (359 aa).

Positions 97, 107, 135, and 224 each coordinate substrate. The Mg(2+) site is built by Asp-224, Asp-248, and Asp-252. Residue 282-294 (GSAPDIAGKDIAN) coordinates NAD(+).

The protein belongs to the isocitrate and isopropylmalate dehydrogenases family. LeuB type 1 subfamily. As to quaternary structure, homodimer. The cofactor is Mg(2+). It depends on Mn(2+) as a cofactor.

Its subcellular location is the cytoplasm. The enzyme catalyses (2R,3S)-3-isopropylmalate + NAD(+) = 4-methyl-2-oxopentanoate + CO2 + NADH. It functions in the pathway amino-acid biosynthesis; L-leucine biosynthesis; L-leucine from 3-methyl-2-oxobutanoate: step 3/4. In terms of biological role, catalyzes the oxidation of 3-carboxy-2-hydroxy-4-methylpentanoate (3-isopropylmalate) to 3-carboxy-4-methyl-2-oxopentanoate. The product decarboxylates to 4-methyl-2 oxopentanoate. In Prochlorococcus marinus (strain NATL2A), this protein is 3-isopropylmalate dehydrogenase.